Here is a 153-residue protein sequence, read N- to C-terminus: MTHDNKLQVEAIKRGTVIDHIPAQIGFKLLSLFKLTETDQRITIGLNLPSGEMGRKDLIKIENTFLSEDQVDQLALYAPQATVNRIDNYEVVGKSRPSLPERIDNVLVCPNSNCISHAEPVSSSFTVRKRANDIALKCKYCEKEFSHNVVLAN.

Zn(2+) contacts are provided by C109, C114, C138, and C141.

Belongs to the PyrI family. As to quaternary structure, contains catalytic and regulatory chains. Zn(2+) is required as a cofactor.

Its function is as follows. Involved in allosteric regulation of aspartate carbamoyltransferase. This chain is Aspartate carbamoyltransferase regulatory chain, found in Escherichia coli O7:K1 (strain IAI39 / ExPEC).